Here is a 497-residue protein sequence, read N- to C-terminus: 5'-AMP-activated protein kinase subunit gamma-3 (497 aa).

Positions 16–143 are disordered; sequence STQTPSWSSF…SSSSTDDLDQ (128 aa). A compositionally biased stretch (polar residues) spans 39–54; the sequence is GDSTSWPSPAMTTSAE. Basic and acidic residues predominate over residues 68-79; it reads KSQEDVEERELP. 3 CBS domains span residues 204–265, 287–345, and 363–423; these read MATS…RSPL, CFKP…QRTL, and TFRD…HLDI. ADP is bound by residues Arg232, 247–252, Val292, 313–314, and Lys332; these read MLTITD and HR. Residues Arg232, 247–252, Val292, His313, 313–314, Lys332, Thr363, Ala368, 389–390, 405–408, Arg432, Leu440, His461, 461–462, and 477–480 contribute to the AMP site; these read MLTITD, HR, SA, SRFD, and SLSD. Residues Arg232, 247–252, Val292, 313–314, Arg314, and Lys332 each bind ATP; these read MLTITD and HR. The AMPK pseudosubstrate signature appears at 300-321; sequence LFEAVYTLIKNRIHRLPVLDPV. ADP contacts are provided by residues 405-408, Arg432, Leu440, and 461-462; these read SRFD and HR. ATP is bound by residues 405–408, Arg432, Leu440, and 461–462; these read SRFD and HR. The 60-residue stretch at 435-494 folds into the CBS 4 domain; the sequence is CLEGVLSCQPHETLGEVIDRIAREQVHRLVLVDETQHLLGVVSLSDILQALVLSPAGIDA.

This sequence belongs to the 5'-AMP-activated protein kinase gamma subunit family. In terms of assembly, AMPK is a heterotrimer of an alpha catalytic subunit (PRKAA1 or PRKAA2), a beta (PRKAB1 or PRKAB2) and a gamma non-catalytic subunits (PRKAG1, PRKAG2 or PRKAG3). Interacts with FNIP1 and FNIP2. In terms of processing, phosphorylated by ULK1; leading to negatively regulate AMPK activity and suggesting the existence of a regulatory feedback loop between ULK1 and AMPK. Post-translationally, glycosylated; O-GlcNAcylated by OGT, promoting the AMP-activated protein kinase (AMPK) activity.

Its function is as follows. AMP/ATP-binding subunit of AMP-activated protein kinase (AMPK), an energy sensor protein kinase that plays a key role in regulating cellular energy metabolism. In response to reduction of intracellular ATP levels, AMPK activates energy-producing pathways and inhibits energy-consuming processes: inhibits protein, carbohydrate and lipid biosynthesis, as well as cell growth and proliferation. AMPK acts via direct phosphorylation of metabolic enzymes, and by longer-term effects via phosphorylation of transcription regulators. AMPK also acts as a regulator of cellular polarity by remodeling the actin cytoskeleton; probably by indirectly activating myosin. The AMPK gamma3 subunit is a non-catalytic subunit with a regulatory role in muscle energy metabolism. It mediates binding to AMP, ADP and ATP, leading to AMPK activation or inhibition: AMP-binding results in allosteric activation of alpha catalytic subunit (PRKAA1 or PRKAA2) both by inducing phosphorylation and preventing dephosphorylation of catalytic subunits. ADP also stimulates phosphorylation, without stimulating already phosphorylated catalytic subunit. ATP promotes dephosphorylation of catalytic subunit, rendering the AMPK enzyme inactive. This is 5'-AMP-activated protein kinase subunit gamma-3 (PRKAG3) from Bos taurus (Bovine).